The following is a 178-amino-acid chain: Protein GrpE (178 aa).

It belongs to the GrpE family. Homodimer.

It localises to the cytoplasm. Functionally, participates actively in the response to hyperosmotic and heat shock by preventing the aggregation of stress-denatured proteins, in association with DnaK and GrpE. It is the nucleotide exchange factor for DnaK and may function as a thermosensor. Unfolded proteins bind initially to DnaJ; upon interaction with the DnaJ-bound protein, DnaK hydrolyzes its bound ATP, resulting in the formation of a stable complex. GrpE releases ADP from DnaK; ATP binding to DnaK triggers the release of the substrate protein, thus completing the reaction cycle. Several rounds of ATP-dependent interactions between DnaJ, DnaK and GrpE are required for fully efficient folding. In Rickettsia typhi (strain ATCC VR-144 / Wilmington), this protein is Protein GrpE.